The chain runs to 292 residues: Expansin-B11 (292 aa).

Residues 1–27 form the signal peptide; the sequence is MAKSCTLVLLLVALVGLSLLVSPIACS. A glycan (N-linked (GlcNAc...) asparagine) is linked at Asn-51. The 111-residue stretch at 82–192 folds into the Expansin-like EG45 domain; the sequence is GGACGYQTAV…RRVPCKYSGV (111 aa). Cystine bridges form between Cys-85/Cys-114, Cys-117/Cys-187, and Cys-122/Cys-128. Residues 205 to 287 enclose the Expansin-like CBD domain; sequence FYFEVLIEFE…SWKPGVTYRS (83 aa).

Belongs to the expansin family. Expansin B subfamily. Expressed in internodes.

It localises to the secreted. Its subcellular location is the cell wall. It is found in the membrane. Functionally, may cause loosening and extension of plant cell walls by disrupting non-covalent bonding between cellulose microfibrils and matrix glucans. No enzymatic activity has been found. May be required for rapid internodal elongation in deepwater rice during submergence. This Oryza sativa subsp. japonica (Rice) protein is Expansin-B11 (EXPB11).